Here is a 261-residue protein sequence, read N- to C-terminus: MFEILFPALLTGIVLSLITAPLGVFVVWRKMAYFGDTLSHSALLGVALGIFLQVNPYIAIVVLTLILAIAMVWLESNTQFSIDTLLGIIAHSCLSLGVVTVGLLRNVRVDLMNYLFGDLLAINYTDLIYIGIGVIIVLSTLIYFWQSLLSTTVSPELAQVEGINIKKMRFILMILTALTIALSMKFVGALIITSLLIIPAATARRFARTPESMVGWAIIMSMLSIIGGLILSAFYDTAAGPSVVICSAFLFVLSLFKRERL.

Transmembrane regions (helical) follow at residues 8–28 (ALLT…FVVW), 54–74 (VNPY…MVWL), 84–104 (TLLG…VGLL), 125–145 (TDLI…IYFW), 171–191 (ILMI…GALI), 214–234 (VGWA…LSAF), and 236–256 (DTAA…LSLF).

It belongs to the ABC-3 integral membrane protein family.

It is found in the cell inner membrane. Involved in the high-affinity zinc uptake transport system. This is High-affinity zinc uptake system membrane protein ZnuB (znuB) from Haemophilus influenzae (strain ATCC 51907 / DSM 11121 / KW20 / Rd).